Here is a 400-residue protein sequence, read N- to C-terminus: Glycerol-3-phosphate dehydrogenase [NAD(+)] 1, chloroplastic (400 aa).

The N-terminal 32 residues, 1-32 (MRFRSFFFSSSIFSLSHSRSPSLSSSRFSSLS), are a transit peptide targeting the chloroplast. Residues 61-66 (GSGNWG), F92, F149, K172, and A205 contribute to the NAD(+) site. K172 serves as a coordination point for substrate. K257 (proton acceptor) is an active-site residue. The NAD(+) site is built by R321, K350, and Q352. Position 321-322 (321-322 (RN)) interacts with substrate.

Belongs to the NAD-dependent glycerol-3-phosphate dehydrogenase family. Expressed in young seedlings, flowers and siliques. Expressed at low levels in roots.

It localises to the plastid. It is found in the chloroplast. The catalysed reaction is sn-glycerol 3-phosphate + NAD(+) = dihydroxyacetone phosphate + NADH + H(+). The protein operates within membrane lipid metabolism; glycerophospholipid metabolism. In terms of biological role, involved in glycerolipid metabolism. The sequence is that of Glycerol-3-phosphate dehydrogenase [NAD(+)] 1, chloroplastic (DHAPRD) from Arabidopsis thaliana (Mouse-ear cress).